Here is a 289-residue protein sequence, read N- to C-terminus: Rhodopsin (289 aa).

The Extracellular portion of the chain corresponds to Tyr1–Ala7. A helical transmembrane segment spans residues Tyr8–Val32. Residues Thr33–Asn44 lie on the Cytoplasmic side of the membrane. The chain crosses the membrane as a helical span at residues Tyr45–Tyr67. Topologically, residues Thr68 to Cys81 are extracellular. A disulfide bridge links Cys81 with Cys158. Residues Asn82–Ile104 form a helical membrane-spanning segment. Positions Glu105–Trp107 match the 'Ionic lock' involved in activated form stabilization motif. Topologically, residues Glu105 to His123 are cytoplasmic. Residues Ala124 to Val144 form a helical membrane-spanning segment. Topologically, residues Gly145–Ser173 are extracellular. The N-linked (GlcNAc...) asparagine glycan is linked to Asn171. A helical membrane pass occupies residues Phe174–Gly195. At Arg196–Arg223 the chain is on the cytoplasmic side. The chain crosses the membrane as a helical span at residues Met224–Tyr245. Residues Ile246–Ile257 lie on the Extracellular side of the membrane. A helical membrane pass occupies residues Phe258–Cys279. Lys267 carries the N6-(retinylidene)lysine modification. Over Met280–Ile289 the chain is Cytoplasmic.

Belongs to the G-protein coupled receptor 1 family. Opsin subfamily. In terms of processing, phosphorylated on some or all of the serine and threonine residues present in the C-terminal region. Contains one covalently linked retinal chromophore.

The protein localises to the membrane. Its subcellular location is the cell projection. It localises to the cilium. It is found in the photoreceptor outer segment. Its function is as follows. Photoreceptor required for image-forming vision at low light intensity. While most salt water fish species use retinal as chromophore, most freshwater fish use 3-dehydroretinal, or a mixture of retinal and 3-dehydroretinal. Light-induced isomerization of 11-cis to all-trans retinal triggers a conformational change that activates signaling via G-proteins. Subsequent receptor phosphorylation mediates displacement of the bound G-protein alpha subunit by arrestin and terminates signaling. The protein is Rhodopsin (rho) of Cottocomephorus grewingkii (Baikal yellowfin).